A 249-amino-acid chain; its full sequence is Flagellar brake protein YcgR (249 aa).

The region spanning 117-236 (QRREFFRVDA…ERELQQVIFS (120 aa)) is the PilZ domain.

The protein belongs to the YcgR family. As to quaternary structure, monomer. Interacts with the flagellar basal bodies.

It localises to the bacterial flagellum basal body. In terms of biological role, acts as a flagellar brake, regulating swimming and swarming in a bis-(3'-5') cyclic diguanylic acid (c-di-GMP)-dependent manner. Binds 1 c-di-GMP dimer per subunit. Increasing levels of c-di-GMP lead to decreased motility. This chain is Flagellar brake protein YcgR, found in Erwinia tasmaniensis (strain DSM 17950 / CFBP 7177 / CIP 109463 / NCPPB 4357 / Et1/99).